Here is a 152-residue protein sequence, read N- to C-terminus: Small ribosomal subunit protein bS16 (152 aa).

The interval 84–152 (WKWEASNNPQ…EAAAEEEKSE (69 aa)) is disordered. Positions 97–123 (PGQKAKELAAEKAEKEADRKAAEEEAK) are enriched in basic and acidic residues. Residues 124 to 144 (AAAAAPAAEEAPAEEAPAAEA) are compositionally biased toward low complexity.

Belongs to the bacterial ribosomal protein bS16 family.

The sequence is that of Small ribosomal subunit protein bS16 from Maricaulis maris (strain MCS10) (Caulobacter maris).